We begin with the raw amino-acid sequence, 164 residues long: SsrA-binding protein (164 aa).

This sequence belongs to the SmpB family.

The protein resides in the cytoplasm. Its function is as follows. Required for rescue of stalled ribosomes mediated by trans-translation. Binds to transfer-messenger RNA (tmRNA), required for stable association of tmRNA with ribosomes. tmRNA and SmpB together mimic tRNA shape, replacing the anticodon stem-loop with SmpB. tmRNA is encoded by the ssrA gene; the 2 termini fold to resemble tRNA(Ala) and it encodes a 'tag peptide', a short internal open reading frame. During trans-translation Ala-aminoacylated tmRNA acts like a tRNA, entering the A-site of stalled ribosomes, displacing the stalled mRNA. The ribosome then switches to translate the ORF on the tmRNA; the nascent peptide is terminated with the 'tag peptide' encoded by the tmRNA and targeted for degradation. The ribosome is freed to recommence translation, which seems to be the essential function of trans-translation. This chain is SsrA-binding protein, found in Shewanella woodyi (strain ATCC 51908 / MS32).